Reading from the N-terminus, the 633-residue chain is Probable potassium transport system protein Kup (633 aa).

12 helical membrane passes run 21–41, 61–81, 112–132, 149–169, 176–196, 217–237, 258–278, 290–310, 348–368, 377–397, 398–418, and 430–450; these read MLVA…LYTL, ILSL…MMFV, LLVV…MITP, GIDH…FLIQ, IGIL…ALGV, FFMV…LALT, WFLL…ALLL, LLAP…ATVI, IYIG…VIGF, AYGV…SAVM, LLLW…FLLV, and IVQG…LMTT.

This sequence belongs to the HAK/KUP transporter (TC 2.A.72) family.

The protein localises to the cell inner membrane. The catalysed reaction is K(+)(in) + H(+)(in) = K(+)(out) + H(+)(out). Its function is as follows. Transport of potassium into the cell. Likely operates as a K(+):H(+) symporter. The polypeptide is Probable potassium transport system protein Kup (Pseudomonas fluorescens (strain Pf0-1)).